The following is a 212-amino-acid chain: Ribonuclease HII (212 aa).

In terms of domain architecture, RNase H type-2 spans 1–204; it reads MRVGIDEAGR…LRSTAPLYYI (204 aa). Positions 6, 7, and 103 each coordinate a divalent metal cation.

Belongs to the RNase HII family. Mn(2+) is required as a cofactor. Requires Mg(2+) as cofactor.

It localises to the cytoplasm. The catalysed reaction is Endonucleolytic cleavage to 5'-phosphomonoester.. Endonuclease that specifically degrades the RNA of RNA-DNA hybrids. The sequence is that of Ribonuclease HII from Saccharolobus solfataricus (strain ATCC 35092 / DSM 1617 / JCM 11322 / P2) (Sulfolobus solfataricus).